A 136-amino-acid chain; its full sequence is Histone H3.2 (136 aa).

The segment at 1-42 (MARTKQTARKSTGGKAPRKQLATKAARKSAPSAGGVKKPHRY) is disordered. Lys5 is modified (N6,N6,N6-trimethyllysine; alternate). Residue Lys5 is modified to N6,N6-dimethyllysine; alternate. 2 positions are modified to N6-methyllysine; alternate: Lys5 and Lys10. Lys10 is modified (N6-acetyllysine; alternate). A Phosphoserine modification is found at Ser11. Lys15 bears the N6,N6-dimethyllysine; alternate mark. N6-acetyllysine; alternate is present on residues Lys15, Lys19, Lys24, Lys28, and Lys37. N6-methyllysine; alternate is present on residues Lys19, Lys24, Lys28, and Lys37. Lys28 and Lys37 each carry N6,N6,N6-trimethyllysine; alternate. N6,N6-dimethyllysine; alternate is present on residues Lys28 and Lys37. An N6-acetyllysine mark is found at Lys57 and Lys65. The residue at position 80 (Lys80) is an N6,N6,N6-trimethyllysine; alternate. Position 80 is an N6,N6-dimethyllysine; alternate (Lys80). At Lys80 the chain carries N6-methyllysine; alternate.

Belongs to the histone H3 family. As to quaternary structure, the nucleosome is a histone octamer containing two molecules each of H2A, H2B, H3 and H4 assembled in one H3-H4 heterotetramer and two H2A-H2B heterodimers. The octamer wraps approximately 147 bp of DNA. Phosphorylated to form H3S10ph. H3S10ph promotes subsequent H3K14ac formation and is required for transcriptional activation through TBP recruitment to the promoters. Post-translationally, mono-, di- and trimethylated by the COMPASS complex to form H3K4me1/2/3. H3K4me activates gene expression by regulating transcription elongation and plays a role in telomere length maintenance. H3K4me enrichment correlates with transcription levels, and occurs in a 5' to 3' gradient with H3K4me3 enrichment at the 5'-end of genes, shifting to H3K4me2 and then H3K4me1. Methylated by SET2 to form H3K36me. H3K36me represses gene expression. Methylated by DOT1 to form H3K79me. H3K79me is required for association of SIR proteins with telomeric regions and for telomeric silencing. The COMPASS-mediated formation of H3K4me2/3 and the DOT1-mediated formation of H3K79me require H2BK123ub1. In terms of processing, acetylation of histone H3 leads to transcriptional activation. H3K14ac formation by GCN5 is promoted by H3S10ph. H3K14ac can also be formed by ESA1. H3K56ac formation occurs predominantly in newly synthesized H3 molecules during G1, S and G2/M of the cell cycle and may be involved in DNA repair.

It is found in the nucleus. The protein localises to the chromosome. Core component of nucleosome. Nucleosomes wrap and compact DNA into chromatin, limiting DNA accessibility to the cellular machineries which require DNA as a template. Histones thereby play a central role in transcription regulation, DNA repair, DNA replication and chromosomal stability. DNA accessibility is regulated via a complex set of post-translational modifications of histones, also called histone code, and nucleosome remodeling. This chain is Histone H3.2 (HHT2), found in Mycosarcoma maydis (Corn smut fungus).